We begin with the raw amino-acid sequence, 349 residues long: Rhodopsin (349 aa).

Residues 1 to 33 (TEGPYFYIPMSNATGIVRSPYEYPQYYLVYPAA) are Extracellular-facing. An N-linked (GlcNAc...) asparagine glycan is attached at N12. The chain crosses the membrane as a helical span at residues 34–58 (YAVLGAYMFFLIIFGFPVNFLTLYV). Over 59–70 (TIEHKKLRTPLN) the chain is Cytoplasmic. A helical membrane pass occupies residues 71–93 (YILLNLAVADLFMVIGGFTTTIY). Residues 94 to 107 (TSMHGYFVLGRLGC) lie on the Extracellular side of the membrane. Cysteines 107 and 184 form a disulfide. The chain crosses the membrane as a helical span at residues 108 to 130 (NLEGFSATLGGMIGLWSLVVLAI). Positions 131 to 133 (ERW) match the 'Ionic lock' involved in activated form stabilization motif. Residues 131–149 (ERWVVVCKPMSNFRFGENH) lie on the Cytoplasmic side of the membrane. The helical transmembrane segment at 150–170 (AIMGVTLTWVMGLACTVPPLV) threads the bilayer. Topologically, residues 171 to 199 (GWSRYIPEGMQCSCGIDYYTRAEGFNNDS) are extracellular. A glycan (N-linked (GlcNAc...) asparagine) is linked at N197. The chain crosses the membrane as a helical span at residues 200-221 (YVLYMFVCHFLIPLVVIFFCYG). Residues 222–249 (RLLCAVKEAAAAQQESETTQRAEREVTR) are Cytoplasmic-facing. A helical transmembrane segment spans residues 250 to 271 (MVILMVIGFLVCWLPYASVAWY). Over 272 to 283 (IFTHQGSEFGPL) the chain is Extracellular. A helical transmembrane segment spans residues 284–305 (FMTIPAFFAKSSSIYNPVIYIC). Position 293 is an N6-(retinylidene)lysine (K293). Residues 306-349 (MNKQFRQCMLTTLFCGKNPFEEEEGASSTKTEASSASSSSVSPA) lie on the Cytoplasmic side of the membrane. C320 carries the S-palmitoyl cysteine lipid modification. The disordered stretch occupies residues 326 to 349 (EEEEGASSTKTEASSASSSSVSPA). Residues 331 to 349 (ASSTKTEASSASSSSVSPA) show a composition bias toward low complexity.

It belongs to the G-protein coupled receptor 1 family. Opsin subfamily. Phosphorylated on some or all of the serine and threonine residues present in the C-terminal region. In terms of processing, contains one covalently linked retinal chromophore.

It is found in the membrane. The protein resides in the cell projection. The protein localises to the cilium. Its subcellular location is the photoreceptor outer segment. Photoreceptor required for image-forming vision at low light intensity. While most salt water fish species use retinal as chromophore, most freshwater fish use 3-dehydroretinal, or a mixture of retinal and 3-dehydroretinal. Light-induced isomerization of 11-cis to all-trans retinal triggers a conformational change that activates signaling via G-proteins. Subsequent receptor phosphorylation mediates displacement of the bound G-protein alpha subunit by arrestin and terminates signaling. This chain is Rhodopsin (rho), found in Myripristis violacea (Lattice soldierfish).